The primary structure comprises 76 residues: uncharacterized protein (76 aa).

Residues 20-42 (GIVWGPKLAPWGITLGLGAFYFF) traverse the membrane as a helical segment.

The protein resides in the membrane. This is an uncharacterized protein from Dictyostelium discoideum (Social amoeba).